The following is a 358-amino-acid chain: MRQILFAAAIALTVSILLTPALIKFFAKQGFGQEIRVDGPASHQSKRGTPTMGGVAILIGMWAGYLGSHLIGIAYDAEGPSASALLVLGLATALGAVGFIDDFIKIRKGRNLGLTAAGKYLGQLTAAIVFGVLALQFRGENGLTPASRHLSYVRDITTVSMGVIVFLAFVSLVVVAWSNAVNLTDGLDGLAAGSMSLVLGGYVIITFWQYYHACATKPETGCYNVRDPLDLALVCAAGTAACIGFLWWNAAPAKIFMGDTGSLALGGLLAGLSITTRTELLMVVIGALFVAEAASVVLQVAVFRTTRNRLFKMAPFHHHFELSKWAETTVIIRFWLLAAMASAFGLGLFYSEYLSAVG.

Helical transmembrane passes span 3-23 (QILF…PALI), 54-74 (GVAI…IGIA), 84-104 (ALLV…DDFI), 114-134 (LTAA…GVLA), 156-176 (ITTV…VVVA), 187-207 (LDGL…IITF), 231-251 (LALV…WNAA), 255-275 (IFMG…LSIT), 283-303 (VVIG…VAVF), and 330-350 (VIIR…GLFY).

Belongs to the glycosyltransferase 4 family. MraY subfamily. Mg(2+) serves as cofactor.

The protein localises to the cell membrane. It carries out the reaction UDP-N-acetyl-alpha-D-muramoyl-L-alanyl-gamma-D-glutamyl-meso-2,6-diaminopimeloyl-D-alanyl-D-alanine + di-trans,octa-cis-undecaprenyl phosphate = di-trans,octa-cis-undecaprenyl diphospho-N-acetyl-alpha-D-muramoyl-L-alanyl-D-glutamyl-meso-2,6-diaminopimeloyl-D-alanyl-D-alanine + UMP. The protein operates within cell wall biogenesis; peptidoglycan biosynthesis. Catalyzes the initial step of the lipid cycle reactions in the biosynthesis of the cell wall peptidoglycan: transfers peptidoglycan precursor phospho-MurNAc-pentapeptide from UDP-MurNAc-pentapeptide onto the lipid carrier undecaprenyl phosphate, yielding undecaprenyl-pyrophosphoryl-MurNAc-pentapeptide, known as lipid I. The chain is Phospho-N-acetylmuramoyl-pentapeptide-transferase from Nocardia farcinica (strain IFM 10152).